Here is a 146-residue protein sequence, read N- to C-terminus: Anti-sigma F factor (146 aa).

Belongs to the anti-sigma-factor family.

The catalysed reaction is L-seryl-[protein] + ATP = O-phospho-L-seryl-[protein] + ADP + H(+). It carries out the reaction L-threonyl-[protein] + ATP = O-phospho-L-threonyl-[protein] + ADP + H(+). In terms of biological role, binds to sigma F and blocks its ability to form an RNA polymerase holoenzyme (E-sigma F). Phosphorylates SpoIIAA on a serine residue. This phosphorylation may enable SpoIIAA to act as an anti-anti-sigma factor that counteracts SpoIIAB and thus releases sigma F from inhibition. In Geobacillus thermodenitrificans (strain NG80-2), this protein is Anti-sigma F factor.